A 115-amino-acid polypeptide reads, in one-letter code: Probable non-functional immunoglobulin heavy variable 3-38-3 (115 aa).

An N-terminal signal peptide occupies residues 1 to 19; that stretch reads MQFVLSWVFLVAILKGVQC. The framework-1 stretch occupies residues 20-44; that stretch reads EVQLVESRGVLVQPGGSLRLSCAAS. Residues 31-115 form the Ig-like domain; the sequence is VQPGGSLRLS…EDTAVYYCKK (85 aa). An intrachain disulfide couples C41 to C113. The interval 45 to 52 is complementarity-determining-1; the sequence is GFTVSSNE. The framework-2 stretch occupies residues 53-69; that stretch reads MSWVRQAPGKGLEWVSS. A complementarity-determining-2 region spans residues 70-75; the sequence is ISGGST. The interval 76-113 is framework-3; the sequence is YYADSRKGRFTISRDNSKNTLHLQMNSLRAEDTAVYYC. Residues 114-115 form a complementarity-determining-3 region; that stretch reads KK.

As to quaternary structure, immunoglobulins are composed of two identical heavy chains and two identical light chains; disulfide-linked.

The protein localises to the secreted. Its subcellular location is the cell membrane. Functionally, probable non-functional open reading frame (ORF) of V region of the variable domain of immunoglobulin heavy chains. Non-functional ORF generally cannot participate in the synthesis of a productive immunoglobulin chain due to altered V-(D)-J or switch recombination and/or splicing site (at mRNA level) and/or conserved amino acid change (protein level). Immunoglobulins, also known as antibodies, are membrane-bound or secreted glycoproteins produced by B lymphocytes. In the recognition phase of humoral immunity, the membrane-bound immunoglobulins serve as receptors which, upon binding of a specific antigen, trigger the clonal expansion and differentiation of B lymphocytes into immunoglobulins-secreting plasma cells. Secreted immunoglobulins mediate the effector phase of humoral immunity, which results in the elimination of bound antigens. The antigen binding site is formed by the variable domain of one heavy chain, together with that of its associated light chain. Thus, each immunoglobulin has two antigen binding sites with remarkable affinity for a particular antigen. The variable domains are assembled by a process called V-(D)-J rearrangement and can then be subjected to somatic hypermutations which, after exposure to antigen and selection, allow affinity maturation for a particular antigen. The sequence is that of Probable non-functional immunoglobulin heavy variable 3-38-3 from Homo sapiens (Human).